The sequence spans 193 residues: dCTP deaminase (193 aa).

Residues 110-115 (RSSLAR), Asp128, 136-138 (VLE), Tyr171, Lys178, and Gln182 contribute to the dCTP site. Glu138 serves as the catalytic Proton donor/acceptor. Positions 169 to 193 (RPYNRRQDAKYKDQQGAVASRIDKD) are disordered.

The protein belongs to the dCTP deaminase family. Homotrimer.

The enzyme catalyses dCTP + H2O + H(+) = dUTP + NH4(+). The protein operates within pyrimidine metabolism; dUMP biosynthesis; dUMP from dCTP (dUTP route): step 1/2. In terms of biological role, catalyzes the deamination of dCTP to dUTP. In Pectobacterium carotovorum subsp. carotovorum (strain PC1), this protein is dCTP deaminase.